Here is a 1242-residue protein sequence, read N- to C-terminus: DNA polymerase catalytic subunit (1242 aa).

3 disordered regions span residues 14-38 (GAVA…RPPQ), 644-665 (LQSA…SSSS), and 1109-1162 (APQG…RKPP). A compositionally biased stretch (low complexity) spans 653 to 665 (GVSPGSGSNSSSS). Residues 1111–1125 (QGSSDNGDSVTTGVV) are compositionally biased toward polar residues. Residues 1145 to 1155 (ESNRRGGEPAK) are compositionally biased toward basic and acidic residues.

It belongs to the DNA polymerase type-B family. As to quaternary structure, forms a complex with the ssDNA-binding protein UL57, the DNA polymerase processivity factor UL44, and the alkaline exonuclease UL98. Interacts with the putative helicase-primase complex composed of UL70, UL102 and UL105 proteins; these interactions may coordinate leading and lagging strand DNA synthesis at the replication fork.

It localises to the host nucleus. The enzyme catalyses DNA(n) + a 2'-deoxyribonucleoside 5'-triphosphate = DNA(n+1) + diphosphate. Replicates viral genomic DNA in the late phase of lytic infection, producing long concatemeric DNA. The replication complex is composed of six viral proteins: the DNA polymerase, processivity factor, primase, primase-associated factor, helicase, and ssDNA-binding protein. In Homo sapiens (Human), this protein is DNA polymerase catalytic subunit (UL54).